The following is a 130-amino-acid chain: Small ribosomal subunit protein uS9 (130 aa).

The interval 102-130 is disordered; the sequence is GLLTRDSRMKERKKPGLKGARRAPQFSKR. Residues 111–130 are compositionally biased toward basic residues; that stretch reads KERKKPGLKGARRAPQFSKR.

The protein belongs to the universal ribosomal protein uS9 family.

The sequence is that of Small ribosomal subunit protein uS9 from Listeria monocytogenes serovar 1/2a (strain ATCC BAA-679 / EGD-e).